Here is a 90-residue protein sequence, read N- to C-terminus: Acylphosphatase (90 aa).

Residues 4-90 (RMYVKVYGIV…KGEFNNFDTY (87 aa)) enclose the Acylphosphatase-like domain. Active-site residues include R19 and N37.

This sequence belongs to the acylphosphatase family.

The enzyme catalyses an acyl phosphate + H2O = a carboxylate + phosphate + H(+). This chain is Acylphosphatase (acyP), found in Sulfurisphaera tokodaii (strain DSM 16993 / JCM 10545 / NBRC 100140 / 7) (Sulfolobus tokodaii).